Reading from the N-terminus, the 390-residue chain is Methylthioribose-1-phosphate isomerase (390 aa).

Substrate-binding positions include 53–55 (RGA), Arg90, and Gln207. Catalysis depends on Asp248, which acts as the Proton donor. Residue 258–259 (NK) coordinates substrate.

Belongs to the EIF-2B alpha/beta/delta subunits family. MtnA subfamily.

It catalyses the reaction 5-(methylsulfanyl)-alpha-D-ribose 1-phosphate = 5-(methylsulfanyl)-D-ribulose 1-phosphate. The enzyme catalyses 5-deoxy-alpha-D-ribose 1-phosphate = 5-deoxy-D-ribulose 1-phosphate. Its pathway is amino-acid biosynthesis; L-methionine biosynthesis via salvage pathway; L-methionine from S-methyl-5-thio-alpha-D-ribose 1-phosphate: step 1/6. Its function is as follows. Catalyzes the interconversion of methylthioribose-1-phosphate (MTR-1-P) into methylthioribulose-1-phosphate (MTRu-1-P). Also catalyzes the interconversion of 5-deoxyribose 1-phosphate and 5-deoxyribulose 1-phosphate. Part of a bifunctional DHAP-shunt salvage pathway for SAM by-products. This Rhodospirillum rubrum (strain ATCC 11170 / ATH 1.1.1 / DSM 467 / LMG 4362 / NCIMB 8255 / S1) protein is Methylthioribose-1-phosphate isomerase.